A 109-amino-acid chain; its full sequence is Irditoxin subunit A (109 aa).

A signal peptide spans 1-19 (MKTLLLAVAVVAFVCLGSA). A propeptide spanning residues 20–34 (DQLGLGRQQIDWGQG) is cleaved from the precursor. The residue at position 35 (Gln35) is a Pyrrolidone carboxylic acid. 5 disulfides stabilise this stretch: Cys44–Cys66, Cys47–Cys55, Cys61–Cys85, Cys89–Cys100, and Cys101–Cys106.

It belongs to the three-finger toxin family. Ancestral subfamily. Boigatoxin sub-subfamily. In terms of assembly, heterodimer of A and B chains; disulfide-linked. In terms of tissue distribution, expressed by the venom gland.

It localises to the secreted. This bird and reptile-specific postsynaptic neurotoxin inhibits the chick muscle alpha-1-beta-1-gamma-delta (CHRNA1-CHRNB1-CHRNG-CHNRD) nicotinic acetylcholine receptor (nAChR) 100-fold more compared with the mouse receptor. In vivo, produces rapid flaccid paralysis, dyspnea and increased respiratory rate in geckos. At sublethal doses geckos were immobilized for up to three days and then recovered. Chicks injected with lethal doses showed rapid onset of inactivity, dyspnea and neck droop, and no extended paralysis with survival was seen. The sequence is that of Irditoxin subunit A from Boiga irregularis (Brown tree snake).